The primary structure comprises 631 residues: Phosphomethylpyrimidine synthase (631 aa).

Substrate is bound by residues Asn-239, Met-268, Tyr-297, His-333, 353 to 355 (SRG), 394 to 397 (DGLR), and Glu-433. His-437 is a Zn(2+) binding site. Tyr-460 lines the substrate pocket. His-501 is a binding site for Zn(2+). Residues Cys-581, Cys-584, and Cys-589 each contribute to the [4Fe-4S] cluster site.

Belongs to the ThiC family. In terms of assembly, homodimer. [4Fe-4S] cluster serves as cofactor.

It carries out the reaction 5-amino-1-(5-phospho-beta-D-ribosyl)imidazole + S-adenosyl-L-methionine = 4-amino-2-methyl-5-(phosphooxymethyl)pyrimidine + CO + 5'-deoxyadenosine + formate + L-methionine + 3 H(+). It participates in cofactor biosynthesis; thiamine diphosphate biosynthesis. In terms of biological role, catalyzes the synthesis of the hydroxymethylpyrimidine phosphate (HMP-P) moiety of thiamine from aminoimidazole ribotide (AIR) in a radical S-adenosyl-L-methionine (SAM)-dependent reaction. The polypeptide is Phosphomethylpyrimidine synthase (Shigella dysenteriae serotype 1 (strain Sd197)).